A 1567-amino-acid chain; its full sequence is Ice nucleation protein (1567 aa).

Low complexity predominate over residues 130–185 (PAAEPSAPATQATSATLPTPATPSTQATPSTQSTQSTQSTEATQSTEATPVATVAA). 13 disordered regions span residues 130-195 (PAAE…QQHD), 270-329 (YGST…KGSD), 356-378 (AGSE…GSDV), 449-474 (TQTS…GSDI), 502-529 (SESS…YGST), 594-620 (QTAG…DVTA), 642-668 (QTSG…DVTA), 689-716 (TQTS…DVTA), 738-764 (QTSG…DVTA), 785-810 (TQTS…GSDI), 833-860 (TQTS…DVTA), 929-959 (TQTS…AGYG), and 977-1004 (TQTS…DVTA). A compositionally biased stretch (polar residues) spans 270 to 282 (YGSTQTAQEGSRL). A compositionally biased stretch (low complexity) spans 283–296 (TSGYGSTATSGSDS). 4 stretches are compositionally biased toward polar residues: residues 302–325 (YGST…QTAR), 356–373 (AGSE…QTAR), 449–469 (TQTS…QTAR), and 502–519 (SESS…AQQD). The span at 520–529 (SSLTTGYGST) shows a compositional bias: low complexity. 8 stretches are compositionally biased toward polar residues: residues 594–613 (QTAG…QTAR), 642–661 (QTSG…QTAR), 689–709 (TQTS…QTAR), 738–757 (QTSG…QTAR), 785–805 (TQTS…QTAR), 833–853 (TQTS…QTAR), 929–949 (TQTS…QTAR), and 977–997 (TQTS…QTAR).

The protein belongs to the bacterial ice nucleation protein family.

It localises to the cell outer membrane. Its function is as follows. Ice nucleation proteins enable bacteria to nucleate crystallization in supercooled water. The sequence is that of Ice nucleation protein (inaX) from Xanthomonas campestris pv. translucens.